Consider the following 673-residue polypeptide: Potassium-transporting ATPase ATP-binding subunit (673 aa).

4 consecutive transmembrane segments (helical) span residues 34 to 54, 65 to 85, 216 to 236, and 253 to 273; these read IMFV…YPDL, VFSI…SEAL, IALF…ILTM, and IALA…AIGI. The active-site 4-aspartylphosphate intermediate is the aspartate 304. ATP contacts are provided by residues aspartate 341, glutamate 345, 370–377, and lysine 388; that span reads FTAETRMS. Aspartate 511 and aspartate 515 together coordinate Mg(2+). 3 helical membrane passes run 581–601, 609–629, and 649–669; these read FAIL…LNIM, AVLS…PIAM, and VYGL…DLII.

This sequence belongs to the cation transport ATPase (P-type) (TC 3.A.3) family. Type IA subfamily. The system is composed of three essential subunits: KdpA, KdpB and KdpC.

The protein resides in the cell membrane. It catalyses the reaction K(+)(out) + ATP + H2O = K(+)(in) + ADP + phosphate + H(+). In terms of biological role, part of the high-affinity ATP-driven potassium transport (or Kdp) system, which catalyzes the hydrolysis of ATP coupled with the electrogenic transport of potassium into the cytoplasm. This subunit is responsible for energy coupling to the transport system and for the release of the potassium ions to the cytoplasm. The polypeptide is Potassium-transporting ATPase ATP-binding subunit (Staphylococcus epidermidis (strain ATCC 35984 / DSM 28319 / BCRC 17069 / CCUG 31568 / BM 3577 / RP62A)).